The primary structure comprises 652 residues: Putative enzymatic polyprotein (652 aa).

Residues 21–99 enclose the Peptidase A2 domain; sequence YHGLFDTGAN…SPDIIIGATF (79 aa). Aspartate 26 is an active-site residue. In terms of domain architecture, Reverse transcriptase spans 231–413; that stretch reads FIEEKTNFED…EKIDFLGVQI (183 aa). The Mg(2+) site is built by aspartate 301, aspartate 364, and aspartate 365.

It catalyses the reaction DNA(n) + a 2'-deoxyribonucleoside 5'-triphosphate = DNA(n+1) + diphosphate. It carries out the reaction Endonucleolytic cleavage to 5'-phosphomonoester.. Its function is as follows. Encodes for at least two polypeptides: protease (PR) and reverse transcriptase (RT). The protease processes the polyprotein in cis. Reverse transcriptase is multifunctional enzyme that converts the viral RNA genome into dsDNA in viral cytoplasmic capsids. This enzyme displays a DNA polymerase activity that can copy either DNA or RNA templates, and a ribonuclease H (RNase H) activity that cleaves the RNA strand of RNA-DNA heteroduplexes in a partially processive 3'- to 5'-endonucleasic mode. Neo-synthesized pregenomic RNA (pgRNA) are encapsidated, and reverse-transcribed inside the nucleocapsid. Partial (+)DNA is synthesized from the (-)DNA template and generates the relaxed circular DNA (RC-DNA) genome. After budding and infection, the RC-DNA migrates in the nucleus, and is converted into a plasmid-like covalently closed circular DNA (cccDNA). This chain is Putative enzymatic polyprotein, found in Cassava vein mosaic virus (CsVMV).